The chain runs to 371 residues: Lysine racemase (371 aa).

Lys39 (proton acceptor) is an active-site residue. Lys39 carries the post-translational modification N6-(pyridoxal phosphate)lysine. Arg135 is a binding site for substrate. Tyr266 acts as the Proton acceptor in catalysis. Met313 lines the substrate pocket.

It belongs to the alanine racemase family. Homodimer. The cofactor is pyridoxal 5'-phosphate.

It carries out the reaction L-lysine = D-lysine. Functionally, catalyzes the interconversion of D-lysine and L-lysine. Can also use arginine and ornithine, but not alanine. In Oenococcus oeni (strain ATCC BAA-331 / PSU-1), this protein is Lysine racemase.